The sequence spans 228 residues: L-ribulose-5-phosphate 4-epimerase UlaF (228 aa).

Substrate is bound by residues 26 to 27 (GN), 43 to 44 (SG), and 72 to 73 (SS). Zn(2+) contacts are provided by D74, H93, and H95. The Proton donor/acceptor role is filled by D118. Residue H167 coordinates Zn(2+). The active-site Proton donor/acceptor is the Y225.

Belongs to the aldolase class II family. AraD/FucA subfamily. It depends on Zn(2+) as a cofactor.

The enzyme catalyses L-ribulose 5-phosphate = D-xylulose 5-phosphate. It participates in cofactor degradation; L-ascorbate degradation; D-xylulose 5-phosphate from L-ascorbate: step 4/4. Its function is as follows. Catalyzes the isomerization of L-ribulose 5-phosphate to D-xylulose 5-phosphate. Is involved in the anaerobic L-ascorbate utilization. This chain is L-ribulose-5-phosphate 4-epimerase UlaF, found in Escherichia coli O6:K15:H31 (strain 536 / UPEC).